The primary structure comprises 617 residues: Prothrombin (617 aa).

An N-terminal signal peptide occupies residues M1 to S24. Positions Q25–R43 are excised as a propeptide. The Gla domain occupies A44–V90. 10 positions are modified to 4-carboxyglutamate: E50, E51, E58, E60, E63, E64, E69, E70, E73, and E76. C61 and C66 form a disulfide bridge. 10 disulfide bridges follow: C91-C104, C109-C187, C130-C170, C158-C182, C215-C292, C236-C276, C264-C287, C332-C478, C387-C403, and C532-C546. 2 consecutive Kringle domains span residues C109–C187 and C215–C292. N-linked (GlcNAc...) asparagine glycosylation is found at N120 and N144. The 255-residue stretch at I360 to D614 folds into the Peptidase S1 domain. H402 serves as the catalytic Charge relay system. The N-linked (GlcNAc...) asparagine glycan is linked to N412. Catalysis depends on D458, which acts as the Charge relay system. Residues A547 to V569 form a high affinity receptor-binding region which is also known as the TP508 peptide region. The N-linked (GlcNAc...) asparagine glycan is linked to N552. C560 and C590 are joined by a disulfide. S564 (charge relay system) is an active-site residue.

This sequence belongs to the peptidase S1 family. In terms of assembly, heterodimer (named alpha-thrombin) of a light and a heavy chain; disulfide-linked. Forms a heterodimer with SERPINA5. In plasma, interacts (via N-terminus) with alpha-1-microglobulin; this interaction does not prevent the activation of prothrombin to thrombin. The gamma-carboxyglutamyl residues, which bind calcium ions, result from the carboxylation of glutamyl residues by a microsomal enzyme, the vitamin K-dependent carboxylase. The modified residues are necessary for the calcium-dependent interaction with a negatively charged phospholipid surface, which is essential for the conversion of prothrombin to thrombin. Post-translationally, in the penultimate step of the coagulation cascade, prothrombin is converted to thrombin by the prothrombinase complex composed of factor Xa (F10), cofactor Va (F5), and phospholipids. This activation requires factor Xa-catalyzed sequential cleavage at 2 sites, Arg-310 and Arg-359, along 2 possible pathways. In the first pathway, the first cleavage occurs at Arg-310, leading to the formation of the inactive intermediate prethrombin-2. This pathway preferentially occurs on platelets and in the absence of cofactor Va. In the second pathway, the first cleavage occurs at Arg-359, which separates protease domain into 2 chains that remain connected through a disulfide bond and generates the active intermediate meizothrombin. The presence of cofactor Va directs activation along the meizothrombin pathway and greatly accelerates the rate of cleavage at Arg-359, but has a smaller effect on the cleavage of meizothrombin at Arg-310. Meizothrombin accumulates as an intermediate when prothrombinase is assembled on the membrane of red blood cells.

The catalysed reaction is Selective cleavage of Arg-|-Gly bonds in fibrinogen to form fibrin and release fibrinopeptides A and B.. With respect to regulation, activity is promoted in the presence of negatively charged surfaces, such as polyphosphate and dextran sulfate. Inhibited by SERPINA5. Thrombin, which cleaves bonds after Arg and Lys, converts fibrinogen to fibrin and activates factors V, VII, VIII, XIII, and, in complex with thrombomodulin, protein C. Functions in blood homeostasis, inflammation and wound healing. Activates coagulation factor XI (F11); activation is promoted by the contact with negatively charged surfaces. Triggers the production of pro-inflammatory cytokines, such as MCP-1/CCL2 and IL8/CXCL8, in endothelial cells. The polypeptide is Prothrombin (F2) (Rattus norvegicus (Rat)).